We begin with the raw amino-acid sequence, 393 residues long: Rubredoxin-NAD(+) reductase (393 aa).

Residues 9 to 12 (SGMA), 33 to 34 (CA), lysine 42, valine 80, glutamate 162, aspartate 282, valine 294, and lysine 325 contribute to the FAD site.

This sequence belongs to the FAD-dependent oxidoreductase family. Homodimer. FAD serves as cofactor.

The protein localises to the cytoplasm. It carries out the reaction 2 reduced [rubredoxin] + NAD(+) + H(+) = 2 oxidized [rubredoxin] + NADH. The protein operates within hydrocarbon metabolism; alkane degradation. Involved in the hydrocarbon hydroxylating system, which transfers electrons from NADH to rubredoxin reductase and then through rubredoxin to alkane 1 monooxygenase. The sequence is that of Rubredoxin-NAD(+) reductase (rubB) from Acinetobacter baylyi (strain ATCC 33305 / BD413 / ADP1).